The primary structure comprises 528 residues: UDP-glucuronosyltransferase 1A9 (528 aa).

The first 23 residues, 1–23 (MAPVAFPTSFFLCLLLASGLAQA), serve as a signal peptide directing secretion. N-linked (GlcNAc...) asparagine glycosylation occurs at asparagine 69. Lysine 97 carries the post-translational modification N6-succinyllysine. 2 N-linked (GlcNAc...) asparagine glycosylation sites follow: asparagine 290 and asparagine 428. The chain crosses the membrane as a helical span at residues 486-506 (VIGFLLAIVLTVVFIVFKCCA).

Belongs to the UDP-glycosyltransferase family. As to quaternary structure, homodimer. Homooligomer. Interacts with UGT1A1, UGT1A3, UGT1A4, UGT1A6, UGT1A7, UGT1A8 and UGT1A10 to form heterodimers. Highly expressed in liver and at lower levels in stomach and kidney.

It localises to the endoplasmic reticulum membrane. It carries out the reaction glucuronate acceptor + UDP-alpha-D-glucuronate = acceptor beta-D-glucuronoside + UDP + H(+). The catalysed reaction is 2-hydroxy-17beta-estradiol + UDP-alpha-D-glucuronate = 2-hydroxy-17beta-estradiol 3-O-(beta-D-glucuronate) + UDP + H(+). It catalyses the reaction 4-hydroxy-17beta-estradiol + UDP-alpha-D-glucuronate = 17beta-estradiol 4-O-(beta-D-glucuronate) + UDP + H(+). The enzyme catalyses 2-hydroxyestrone + UDP-alpha-D-glucuronate = 2-hydroxyestrone 3-O-(beta-D-glucuronate) + UDP + H(+). It carries out the reaction 4-hydroxyestrone + UDP-alpha-D-glucuronate = estrone 4-O-(beta-D-glucuronate) + UDP + H(+). The catalysed reaction is prunetin + UDP-alpha-D-glucuronate = prunetin-5-O-beta-D-glucuronide + UDP. It catalyses the reaction 8-iso-prostaglandin F2alpha + UDP-alpha-D-glucuronate = 8-iso-prostaglandin F2alpha-glucuronide + UDP + H(+). The enzyme catalyses 5-epi-5-F2t-IsoP + UDP-alpha-D-glucuronate = 5-epi-5-F2t-IsoP-glucuronide + UDP + H(+). It carries out the reaction (5Z,8Z,11Z,14Z)-eicosatetraenoate + UDP-alpha-D-glucuronate = O-[(5Z),(8Z),(11Z),(14Z)-eicosatetraenoyl]-beta-D-glucuronate + UDP. The catalysed reaction is 15-hydroxy-(5Z,8Z,11Z,13E)-eicosatetraenoate + UDP-alpha-D-glucuronate = 15-O-(beta-D-glucuronosyl)-(5Z,8Z,11Z,14Z)-eicosatetraenoate + UDP + H(+). It catalyses the reaction prostaglandin B1 + UDP-alpha-D-glucuronate = 15-O-(beta-D-glucuronosyl)-prostaglandin B1 + UDP + H(+). The enzyme catalyses (E)-ferulate + UDP-alpha-D-glucuronate = (E)-4-O-(beta-D-glucuronosyl)-ferulate + UDP + H(+). It carries out the reaction (E)-ferulate + UDP-alpha-D-glucuronate = (E)-ferulic acid beta-D-glucuronate ester + UDP. The catalysed reaction is candesartan + UDP-alpha-D-glucuronate = candesartan O-beta-D-glucuronoside + UDP. It catalyses the reaction SN-38 + UDP-alpha-D-glucuronate = SN-38 O-beta-D-glucuronide + UDP + H(+). The enzyme catalyses mycophenolate + UDP-alpha-D-glucuronate = mycophenolate 7-O-beta-D-glucuronide + UDP + H(+). UDP-glucuronosyltransferase (UGT) that catalyzes phase II biotransformation reactions in which lipophilic substrates are conjugated with glucuronic acid to increase the metabolite's water solubility, thereby facilitating excretion into either the urine or bile. Essential for the elimination and detoxification of drugs, xenobiotics and endogenous compounds. Catalyzes the glucuronidation of endogenous estrogen hormones such as estradiol and estrone. Involved in the glucuronidation of arachidonic acid (AA) and AA-derived eicosanoids including 15-HETE, PGB1 and F2-isoprostanes (8-iso-PGF2alpha and 5-epi-5-F2t-IsoP). Glucuronates the phytochemical ferulic acid efficently at both the phenolic or the carboxylic acid group. Also catalyzes the glucuronidation of the isoflavones genistein, daidzein, glycitein, formononetin, biochanin A and prunetin, which are phytoestrogens with anticancer and cardiovascular properties. Involved in the glucuronidation of the AGTR1 angiotensin receptor antagonist caderastan, a drug which can inhibit the effect of angiotensin II. Involved in the biotransformation of 7-ethyl-10-hydroxycamptothecin (SN-38), the pharmacologically active metabolite of the anticancer drug irinotecan. Also metabolizes mycophenolate, an immunosuppressive agent. This chain is UDP-glucuronosyltransferase 1A9, found in Mus musculus (Mouse).